Here is a 59-residue protein sequence, read N- to C-terminus: Conotoxin ViVB (59 aa).

A signal peptide spans 1–22 (MRCVPVFIILLLLIPSAPSAAV). Residues 23–46 (QPKTEKDDVPLASFHDSAMRILSR) constitute a propeptide that is removed on maturation. Residue Gln-47 is modified to Pyrrolidone carboxylic acid. Position 58 is a valine amide (Val-58).

Contains 2 disulfide bonds that can be either 'C1-C3, C2-C4' or 'C1-C4, C2-C3', since these disulfide connectivities have been observed for conotoxins with cysteine framework V (for examples, see AC P0DQQ7 and AC P81755). Expressed by the venom duct.

Its subcellular location is the secreted. The polypeptide is Conotoxin ViVB (Conus virgo (Virgin cone)).